Consider the following 817-residue polypeptide: V-type proton ATPase subunit a1 (817 aa).

At 1–422 the chain is on the cytoplasmic side; sequence MEEFLDKLPQ…PAVYSVVTYP (422 aa). A coiled-coil region spans residues 97-133; the sequence is DIALGDLERQLADHEHEVLEMNSNSEKLRQTYNELLE. The chain crosses the membrane as a helical span at residues 423-443; that stretch reads FLFAVMFGDWGHGLCLLLGAL. Residues 444–468 are Vacuolar-facing; it reads YLLARERKLSTQKLGSFMEMLFGGR. The chain crosses the membrane as a helical span at residues 469-489; that stretch reads YVILLMALFSIYCGLIYNEFF. Topologically, residues 490–547 are cytoplasmic; that stretch reads SVPFHIFGGSAYKCRDTTCSDAYTVGLIKYRDPYPFGVDPSWRGSRTELPYLNSLKMK. Residues 548-568 traverse the membrane as a helical segment; the sequence is MSILLGIAQMNLGLILSFFNA. Over 569–580 the chain is Vacuolar; sequence RFFGSSLDIRYQ. Residues 581–601 form a helical membrane-spanning segment; the sequence is FIPQMIFLNSLFGYLSLLIII. Residues 602–639 are Cytoplasmic-facing; sequence KWCTGSQADLYHVMIYMFLSPTEELGENELFWGQRPLQ. The helical transmembrane segment at 640–660 threads the bilayer; it reads IVLLLLAFIAVPWMLFPKPFA. Over 661-758 the chain is Vacuolar; the sequence is LRKIHMERFQ…VLLLAWGYEN (98 aa). A helical membrane pass occupies residues 759–779; sequence ILIRLIGVAVFAFATAFILLM. Over 780–817 the chain is Cytoplasmic; the sequence is METLSAFLHALRLHWVEFMGKFFNGDGYKFKPFSFALI.

The protein belongs to the V-ATPase 116 kDa subunit family. As to quaternary structure, V-ATPase is a heteromultimeric enzyme composed of a peripheral catalytic V1 complex (components A to H) attached to an integral membrane V0 proton pore complex (components: a, c, c'', d and e).

It is found in the vacuole membrane. It localises to the golgi apparatus. The protein localises to the trans-Golgi network membrane. In terms of biological role, essential component of the vacuolar proton pump (V-ATPase), a multimeric enzyme that catalyzes the translocation of protons across the membranes. Required for assembly and activity of the V-ATPase. Required during cell expansion. This chain is V-type proton ATPase subunit a1, found in Arabidopsis thaliana (Mouse-ear cress).